The chain runs to 550 residues: Hydroxylamine reductase (550 aa).

Residues cysteine 3, cysteine 6, cysteine 18, and cysteine 25 each coordinate [2Fe-2S] cluster. Residues histidine 249, glutamate 273, cysteine 317, cysteine 405, cysteine 433, cysteine 458, glutamate 492, and lysine 494 each coordinate hybrid [4Fe-2O-2S] cluster. Cysteine 405 bears the Cysteine persulfide mark.

This sequence belongs to the HCP family. [2Fe-2S] cluster serves as cofactor. The cofactor is hybrid [4Fe-2O-2S] cluster.

The protein localises to the cytoplasm. The enzyme catalyses A + NH4(+) + H2O = hydroxylamine + AH2 + H(+). In terms of biological role, catalyzes the reduction of hydroxylamine to form NH(3) and H(2)O. This is Hydroxylamine reductase from Escherichia fergusonii (strain ATCC 35469 / DSM 13698 / CCUG 18766 / IAM 14443 / JCM 21226 / LMG 7866 / NBRC 102419 / NCTC 12128 / CDC 0568-73).